The following is a 665-amino-acid chain: UvrABC system protein C (665 aa).

Residues 16 to 95 (ESPGVYRFRD…IKQYDPRFNV (80 aa)) form the GIY-YIG domain. Positions 208-243 (DLMVRRLEREMADASAELEFERAARLRDDLAALRRA) constitute a UVR domain. The disordered stretch occupies residues 470-507 (EAGVESAGDPATPAGPASTGPGVPDEPRVGTLVDPTTG). A compositionally biased stretch (low complexity) spans 475 to 491 (SAGDPATPAGPASTGPG).

Belongs to the UvrC family. Interacts with UvrB in an incision complex.

The protein resides in the cytoplasm. Its function is as follows. The UvrABC repair system catalyzes the recognition and processing of DNA lesions. UvrC both incises the 5' and 3' sides of the lesion. The N-terminal half is responsible for the 3' incision and the C-terminal half is responsible for the 5' incision. This chain is UvrABC system protein C, found in Salinispora tropica (strain ATCC BAA-916 / DSM 44818 / JCM 13857 / NBRC 105044 / CNB-440).